The primary structure comprises 428 residues: Histidine--tRNA ligase (428 aa).

The protein belongs to the class-II aminoacyl-tRNA synthetase family. In terms of assembly, homodimer.

The protein localises to the cytoplasm. The catalysed reaction is tRNA(His) + L-histidine + ATP = L-histidyl-tRNA(His) + AMP + diphosphate + H(+). This Chlamydia trachomatis serovar A (strain ATCC VR-571B / DSM 19440 / HAR-13) protein is Histidine--tRNA ligase.